The primary structure comprises 889 residues: Serine/threonine-protein kinase D3 (889 aa).

Phosphoserine is present on residues Ser27, Ser37, Ser41, and Ser44. The Phorbol-ester/DAG-type 1 zinc finger occupies 154-204; that stretch reads PHALYVHSYKAPTFCDYCGEMLWGLVRQGLKCEGCGLNYHKRCAFKIPNNC. 2 positions are modified to phosphoserine: Ser213 and Ser216. Residues 271–321 form a Phorbol-ester/DAG-type 2 zinc finger; sequence PHTFAVHSYGRPTICQYCKRLLKGLFRQGMQCKDCKFNCHKRCASKVPRDC. The interval 336–370 is disordered; it reads TDADMPMDIDSSDVNSDGSRGLDDSEEPSPPEDKM. Phosphoserine is present on residues Ser346, Ser391, and Ser395. Residues 416–532 enclose the PH domain; the sequence is TVVKEGWMVH…WEKAIRQALM (117 aa). Residue Tyr426 is modified to Phosphotyrosine. Ser442 is subject to Phosphoserine. At Tyr457 the chain carries Phosphotyrosine. A Phosphothreonine modification is found at Thr535. Phosphoserine is present on Ser539. The region spanning 575–831 is the Protein kinase domain; the sequence is IFADEVLGSG…VDKSLSHPWL (257 aa). ATP contacts are provided by residues 581-589 and Lys604; that span reads LGSGQFGIV. Asp698 (proton acceptor) is an active-site residue. A Phosphoserine; by PKC modification is found at Ser730. The residue at position 734 (Ser734) is a Phosphoserine; by autocatalysis. Tyr741 is subject to Phosphotyrosine.

The protein belongs to the protein kinase superfamily. CAMK Ser/Thr protein kinase family. PKD subfamily. Requires Mg(2+) as cofactor.

Its subcellular location is the cytoplasm. The protein resides in the membrane. It catalyses the reaction L-seryl-[protein] + ATP = O-phospho-L-seryl-[protein] + ADP + H(+). The catalysed reaction is L-threonyl-[protein] + ATP = O-phospho-L-threonyl-[protein] + ADP + H(+). With respect to regulation, activated by DAG and phorbol esters. Phorbol-ester/DAG-type domains 1 and 2 bind both DAG and phorbol ester with high affinity and mediate translocation to the cell membrane. Autophosphorylation of Ser-734 and phosphorylation of Ser-730 by PKC relieves auto-inhibition by the PH domain. Its function is as follows. Converts transient diacylglycerol (DAG) signals into prolonged physiological effects, downstream of PKC. Involved in resistance to oxidative stress. This Mus musculus (Mouse) protein is Serine/threonine-protein kinase D3 (Prkd3).